Consider the following 420-residue polypeptide: Gamma-glutamyl phosphate reductase (420 aa).

It belongs to the gamma-glutamyl phosphate reductase family.

The protein resides in the cytoplasm. The enzyme catalyses L-glutamate 5-semialdehyde + phosphate + NADP(+) = L-glutamyl 5-phosphate + NADPH + H(+). It participates in amino-acid biosynthesis; L-proline biosynthesis; L-glutamate 5-semialdehyde from L-glutamate: step 2/2. In terms of biological role, catalyzes the NADPH-dependent reduction of L-glutamate 5-phosphate into L-glutamate 5-semialdehyde and phosphate. The product spontaneously undergoes cyclization to form 1-pyrroline-5-carboxylate. The sequence is that of Gamma-glutamyl phosphate reductase from Streptococcus pneumoniae (strain CGSP14).